The chain runs to 315 residues: Lipoyl synthase (315 aa).

Positions 62, 67, 73, 88, 92, 95, and 302 each coordinate [4Fe-4S] cluster. One can recognise a Radical SAM core domain in the interval 74-291 (FNHGAATFMI…KKIALKLGFS (218 aa)).

The protein belongs to the radical SAM superfamily. Lipoyl synthase family. It depends on [4Fe-4S] cluster as a cofactor.

Its subcellular location is the cytoplasm. The enzyme catalyses [[Fe-S] cluster scaffold protein carrying a second [4Fe-4S](2+) cluster] + N(6)-octanoyl-L-lysyl-[protein] + 2 oxidized [2Fe-2S]-[ferredoxin] + 2 S-adenosyl-L-methionine + 4 H(+) = [[Fe-S] cluster scaffold protein] + N(6)-[(R)-dihydrolipoyl]-L-lysyl-[protein] + 4 Fe(3+) + 2 hydrogen sulfide + 2 5'-deoxyadenosine + 2 L-methionine + 2 reduced [2Fe-2S]-[ferredoxin]. Its pathway is protein modification; protein lipoylation via endogenous pathway; protein N(6)-(lipoyl)lysine from octanoyl-[acyl-carrier-protein]: step 2/2. Functionally, catalyzes the radical-mediated insertion of two sulfur atoms into the C-6 and C-8 positions of the octanoyl moiety bound to the lipoyl domains of lipoate-dependent enzymes, thereby converting the octanoylated domains into lipoylated derivatives. This Ruthia magnifica subsp. Calyptogena magnifica protein is Lipoyl synthase.